A 678-amino-acid chain; its full sequence is SPS-sensor component PTR3 (678 aa).

Disordered stretches follow at residues 111 to 158 and 179 to 211; these read TGQG…SDPT and ANTE…SSLL. Residues 127–144 show a composition bias toward low complexity; sequence TSPSSSSLSLTPSRSSST. Residues 149-158 show a composition bias toward basic and acidic residues; the sequence is ADNKTLSDPT. Over residues 179 to 194 the composition is skewed to polar residues; sequence ANTEVGSDHPLTTGTT.

As to quaternary structure, homodimer. Component of the plasma membrane SPS (SSY1-PTR3-SSY5) amino acid sensor complex. Interacts directly with SSY1 and SSY5. Hyperphosphorylated in response to extracellular amino acids and dependent on the amino acid sensor component SSY1. Phosphorylation is positively regulated by casein kinases YCK1 and YCK2, and negatively regulated by phosphatase PP2A regulatory subunit RTS1.

The protein localises to the cell membrane. In terms of biological role, component of the SPS-sensor system, which regulates the expression of several amino acid-metabolizing enzymes and amino acid- and peptide-permeases in response to extracellular amino acid levels by controlling the activity of two transcription factors, STP1 and STP2. This is SPS-sensor component PTR3 (PTR3) from Saccharomyces cerevisiae (strain ATCC 204508 / S288c) (Baker's yeast).